Consider the following 276-residue polypeptide: Thiazole synthase (276 aa).

The active-site Schiff-base intermediate with DXP is the Lys117. Residues Gly178, 204–205 (AG), and 226–227 (NT) each bind 1-deoxy-D-xylulose 5-phosphate.

This sequence belongs to the ThiG family. As to quaternary structure, homotetramer. Forms heterodimers with either ThiH or ThiS.

The protein localises to the plastid. Its subcellular location is the chloroplast. It carries out the reaction [ThiS sulfur-carrier protein]-C-terminal-Gly-aminoethanethioate + 2-iminoacetate + 1-deoxy-D-xylulose 5-phosphate = [ThiS sulfur-carrier protein]-C-terminal Gly-Gly + 2-[(2R,5Z)-2-carboxy-4-methylthiazol-5(2H)-ylidene]ethyl phosphate + 2 H2O + H(+). It functions in the pathway cofactor biosynthesis; thiamine diphosphate biosynthesis. In terms of biological role, catalyzes the rearrangement of 1-deoxy-D-xylulose 5-phosphate (DXP) to produce the thiazole phosphate moiety of thiamine. Sulfur is provided by the thiocarboxylate moiety of the carrier protein ThiS. In vitro, sulfur can be provided by H(2)S. The chain is Thiazole synthase from Gracilaria tenuistipitata var. liui (Red alga).